Consider the following 701-residue polypeptide: MNKSGKYLVWTVLSVMGAFALGYIALNRGEQINALWIVVASVCIYLIAYRFYGLYIAKNVLAVDPTRMTPAVRHNDGLDYVPTDKKVLFGHHFAAIAGAGPLVGPVLAAQMGYLPGMIWLLAGVVLAGAVQDFMVLFVSTRRDGRSLGELVKEEMGPTAGVIALVACFMIMVIILAVLAMIVVKALTHSPWGTYTVAFTIPLALFMGIYLRYLRPGRIGEVSVIGLVFLIFAIISGGWVAESPTWAPYFDFTGVQLTWMLVGYGFVAAVLPVWLLLAPRDYLSTFLKIGTIVGLAVGILIMRPTLTMPALTKFVDGTGPVWTGNLFPFLFITIACGAVSGFHALISSGTTPKMLANEGQACFIGYGGMLMESFVAIMALVSACIIDPGVYFAMNSPMAVLAPAGTADVVASAAQVVSSWGFSITPDTLNQIASEVGEQSIISRAGGAPTLAVGMAYILHGALGGMMDVAFWYHFAILFEALFILTAVDAGTRAARFMLQDLLGVVSPGLKRTDSLPANLLATALCVLAWGYFLHQGVVDPLGGINTLWPLFGIANQMLAGMALMLCAVVLFKMKRQRYAWVALVPTAWLLICTLTAGWQKAFSPDAKVGFLAIANKFQAMIDSGNIPSQYTESQLAQLVFNNRLDAGLTIFFMVVVVVLALFSIKTALAALKDPKPTAKETPYEPMPENVEEIVAQAKGAH.

Topologically, residues 1–6 (MNKSGK) are cytoplasmic. The chain crosses the membrane as a helical span at residues 7-27 (YLVWTVLSVMGAFALGYIALN). The Periplasmic portion of the chain corresponds to 28-33 (RGEQIN). Residues 34–54 (ALWIVVASVCIYLIAYRFYGL) traverse the membrane as a helical segment. At 55 to 86 (YIAKNVLAVDPTRMTPAVRHNDGLDYVPTDKK) the chain is on the cytoplasmic side. A helical membrane pass occupies residues 87–107 (VLFGHHFAAIAGAGPLVGPVL). At 108–117 (AAQMGYLPGM) the chain is on the periplasmic side. A helical membrane pass occupies residues 118 to 138 (IWLLAGVVLAGAVQDFMVLFV). Residues 139 to 160 (STRRDGRSLGELVKEEMGPTAG) are Cytoplasmic-facing. Residues 161–181 (VIALVACFMIMVIILAVLAMI) form a helical membrane-spanning segment. Over 182–189 (VVKALTHS) the chain is Periplasmic. The chain crosses the membrane as a helical span at residues 190-210 (PWGTYTVAFTIPLALFMGIYL). The Cytoplasmic portion of the chain corresponds to 211-217 (RYLRPGR). A helical membrane pass occupies residues 218–238 (IGEVSVIGLVFLIFAIISGGW). The Periplasmic segment spans residues 239–255 (VAESPTWAPYFDFTGVQ). The chain crosses the membrane as a helical span at residues 256-276 (LTWMLVGYGFVAAVLPVWLLL). The Cytoplasmic segment spans residues 277-280 (APRD). The helical transmembrane segment at 281 to 301 (YLSTFLKIGTIVGLAVGILIM) threads the bilayer. Topologically, residues 302–324 (RPTLTMPALTKFVDGTGPVWTGN) are periplasmic. A helical transmembrane segment spans residues 325-345 (LFPFLFITIACGAVSGFHALI). At 346–372 (SSGTTPKMLANEGQACFIGYGGMLMES) the chain is on the cytoplasmic side. The helical transmembrane segment at 373–393 (FVAIMALVSACIIDPGVYFAM) threads the bilayer. The Periplasmic portion of the chain corresponds to 394–395 (NS). Residues 396-416 (PMAVLAPAGTADVVASAAQVV) traverse the membrane as a helical segment. Residues 417-439 (SSWGFSITPDTLNQIASEVGEQS) lie on the Cytoplasmic side of the membrane. Residues 440 to 460 (IISRAGGAPTLAVGMAYILHG) form a helical membrane-spanning segment. Over 461-463 (ALG) the chain is Periplasmic. A helical membrane pass occupies residues 464-484 (GMMDVAFWYHFAILFEALFIL). Residues 485–523 (TAVDAGTRAARFMLQDLLGVVSPGLKRTDSLPANLLATA) are Cytoplasmic-facing. The helical transmembrane segment at 524–544 (LCVLAWGYFLHQGVVDPLGGI) threads the bilayer. Residues 545–550 (NTLWPL) lie on the Periplasmic side of the membrane. Residues 551-571 (FGIANQMLAGMALMLCAVVLF) traverse the membrane as a helical segment. Over 572 to 577 (KMKRQR) the chain is Cytoplasmic. Residues 578–598 (YAWVALVPTAWLLICTLTAGW) form a helical membrane-spanning segment. At 599–643 (QKAFSPDAKVGFLAIANKFQAMIDSGNIPSQYTESQLAQLVFNNR) the chain is on the periplasmic side. Residues 644–664 (LDAGLTIFFMVVVVVLALFSI) form a helical membrane-spanning segment. At 665-701 (KTALAALKDPKPTAKETPYEPMPENVEEIVAQAKGAH) the chain is on the cytoplasmic side.

It belongs to the peptide transporter carbon starvation (CstA) (TC 2.A.114) family.

Its subcellular location is the cell inner membrane. Its function is as follows. Involved in peptide utilization during carbon starvation. The sequence is that of Peptide transporter CstA from Escherichia coli (strain K12).